The sequence spans 186 residues: dCTP deaminase (186 aa).

106-111 provides a ligand contact to dCTP; that stretch reads KSTYAR. Catalysis depends on Glu-132, which acts as the Proton donor/acceptor. The dCTP site is built by Gln-151, Tyr-166, and Gln-176.

It belongs to the dCTP deaminase family. In terms of assembly, homotrimer.

It catalyses the reaction dCTP + H2O + H(+) = dUTP + NH4(+). Its pathway is pyrimidine metabolism; dUMP biosynthesis; dUMP from dCTP (dUTP route): step 1/2. Functionally, catalyzes the deamination of dCTP to dUTP. The polypeptide is dCTP deaminase (Nautilia profundicola (strain ATCC BAA-1463 / DSM 18972 / AmH)).